A 37-amino-acid chain; its full sequence is Large ribosomal subunit protein bL36 (37 aa).

Belongs to the bacterial ribosomal protein bL36 family.

This Staphylococcus aureus (strain Mu3 / ATCC 700698) protein is Large ribosomal subunit protein bL36.